The primary structure comprises 435 residues: Temperature-sensitive sn-2 acyl-lipid omega-3 desaturase (ferredoxin), chloroplastic (435 aa).

The transit peptide at 1-42 directs the protein to the chloroplast; that stretch reads MASSVLSECGFRPLPRFYPKHTTSFASNPKPTFKFNPPLKPP. 2 helical membrane passes run 111–131 and 134–154; these read MSYVVRDVAIVFGLAAVAAYF and WLLWPLYWFAQGTMFWALFVL. Residues 156-160 carry the Histidine box-1 motif; sequence HDCGH. Residues 192-196 carry the Histidine box-2 motif; that stretch reads HRTHH. 2 helical membrane passes run 268–290 and 297–319; these read VLTSTACWTAMAALLVCLNFVMG and LYGIPYWIFVMWLDFVTYLHHHG. A Histidine box-3 motif is present at residues 359–363; the sequence is HVIHH.

Belongs to the fatty acid desaturase type 1 family.

It localises to the plastid. It is found in the chloroplast membrane. The catalysed reaction is a (7Z,10Z)-hexadecadienoyl-containing glycerolipid + 2 reduced [2Fe-2S]-[ferredoxin] + O2 + 2 H(+) = a (7Z,10Z,13Z)-hexadecatrienoyl-containing glycerolipid + 2 oxidized [2Fe-2S]-[ferredoxin] + 2 H2O. It carries out the reaction a (9Z,12Z)-octadecadienoyl-containing glycerolipid + 2 reduced [2Fe-2S]-[ferredoxin] + O2 + 2 H(+) = (9Z,12Z,15Z)-octadecatrienoyl-containing glycerolipid + 2 oxidized [2Fe-2S]-[ferredoxin] + 2 H2O. Its pathway is lipid metabolism; polyunsaturated fatty acid biosynthesis. In terms of biological role, chloroplast omega-3 fatty acid desaturase introduces the third double bond in the biosynthesis of 16:3 and 18:3 fatty acids, important constituents of plant membranes. It is thought to use ferredoxin as an electron donor and to act on fatty acids esterified to galactolipids, sulfolipids and phosphatidylglycerol. In Arabidopsis thaliana (Mouse-ear cress), this protein is Temperature-sensitive sn-2 acyl-lipid omega-3 desaturase (ferredoxin), chloroplastic.